Consider the following 179-residue polypeptide: Large ribosomal subunit protein uL6 (179 aa).

It belongs to the universal ribosomal protein uL6 family. As to quaternary structure, part of the 50S ribosomal subunit.

Its function is as follows. This protein binds to the 23S rRNA, and is important in its secondary structure. It is located near the subunit interface in the base of the L7/L12 stalk, and near the tRNA binding site of the peptidyltransferase center. The polypeptide is Large ribosomal subunit protein uL6 (Bifidobacterium longum subsp. infantis (strain ATCC 15697 / DSM 20088 / JCM 1222 / NCTC 11817 / S12)).